A 300-amino-acid chain; its full sequence is Geranylgeranyl pyrophosphate synthase (300 aa).

Met1 is subject to N-acetylmethionine. The isopentenyl diphosphate site is built by Lys25, Arg28, and His57. Asp64 and Asp68 together coordinate Mg(2+). Residue Arg73 participates in dimethylallyl diphosphate binding. Arg74 contacts isopentenyl diphosphate. Dimethylallyl diphosphate-binding residues include Lys151, Thr152, Gln185, Lys202, and Lys212.

Belongs to the FPP/GGPP synthase family. Homohexamer; trimer of homodimers. Mg(2+) serves as cofactor.

It localises to the cytoplasm. Its subcellular location is the perinuclear region. It is found in the myofibril. The protein resides in the sarcomere. The protein localises to the z line. The enzyme catalyses isopentenyl diphosphate + dimethylallyl diphosphate = (2E)-geranyl diphosphate + diphosphate. It catalyses the reaction isopentenyl diphosphate + (2E)-geranyl diphosphate = (2E,6E)-farnesyl diphosphate + diphosphate. The catalysed reaction is isopentenyl diphosphate + (2E,6E)-farnesyl diphosphate = (2E,6E,10E)-geranylgeranyl diphosphate + diphosphate. The protein operates within isoprenoid biosynthesis; farnesyl diphosphate biosynthesis; farnesyl diphosphate from geranyl diphosphate and isopentenyl diphosphate: step 1/1. It participates in isoprenoid biosynthesis; geranyl diphosphate biosynthesis; geranyl diphosphate from dimethylallyl diphosphate and isopentenyl diphosphate: step 1/1. It functions in the pathway isoprenoid biosynthesis; geranylgeranyl diphosphate biosynthesis; geranylgeranyl diphosphate from farnesyl diphosphate and isopentenyl diphosphate: step 1/1. Functionally, catalyzes the trans-addition of the three molecules of IPP onto DMAPP to form geranylgeranyl pyrophosphate, an important precursor of carotenoids and geranylated proteins. The chain is Geranylgeranyl pyrophosphate synthase (GGPS1) from Bos taurus (Bovine).